The chain runs to 470 residues: Putative gustatory receptor 28b (470 aa).

At 1–76 (MDIEMAKEPV…KTGKKAIKKT (76 aa)) the chain is on the cytoplasmic side. A helical membrane pass occupies residues 77–97 (IFGYINGIMHIAMFVFAYSLT). The Extracellular segment spans residues 98-119 (IYNNCESVASYFFRSRITYFGD). The chain crosses the membrane as a helical span at residues 120 to 140 (LMQIVSGFIGVTVIYLTAFVP). Topologically, residues 141–175 (NHRLERCLQKFHTMDVQLQTVGVKIMYSKVLRFSY) are cytoplasmic. Residues 176-196 (MVLISMFLVNVLFTGGTFSVL) traverse the membrane as a helical segment. The Extracellular segment spans residues 197–204 (YSSEVAPT). Residues 205–225 (MALHFTFLIQHTVIAIAIALF) form a helical membrane-spanning segment. At 226 to 309 (SCFTYLVEMR…ATANKYFTYQ (84 aa)) the chain is on the cytoplasmic side. A helical transmembrane segment spans residues 310-330 (LLTIISIAFLIIVFDAYYVLE). Residues 331–346 (TLLGKSKRESKFKTVE) lie on the Extracellular side of the membrane. Residues 347-367 (FVTFFSCQMILYLIAIISIVE) form a helical membrane-spanning segment. Topologically, residues 368–423 (GSNRAIKKSEKTGGIVHSLLNKTKSAEVKEKLQQFSMQLMHLKINFTAAGLFNIDR) are cytoplasmic. A helical membrane pass occupies residues 424 to 444 (TLYFTISGALTTYLIILLQFT). Residues 445 to 470 (SNSPNNGYGNGSSCCETFNNMTNHTL) lie on the Extracellular side of the membrane. 3 N-linked (GlcNAc...) asparagine glycosylation sites follow: Asn454, Asn464, and Asn467.

Belongs to the insect chemoreceptor superfamily. Gustatory receptor (GR) family. Gr66a subfamily. As to expression, isoforms A and E have taste neuron-specific expression restricted to the labial palps, the internal taste organs in the pharynx, and the legs. In addition to expression in a large number of taste neurons, isoform A is also expressed in a few nonchemosensory neurons, including the campaniform sensilla of the wing, leg stretch receptors, and multiple dendritic neurons in the abdomen. Isoform B is the only receptor not expressed in gustatory receptor neurons in the labellum. We observe expression of this receptor in a single large cell at the base of each maxillary palp, in campaniform sensilla of the wing, and multiple dendritic neurons in the abdomen. Isoform C is expressed by many gustatory receptor neurons in the labial palps, the pharyngeal taste clusters, and taste neurons in the legs. In addition, isoform C expressed in a single cell at the base of the maxillary palps, neurons in the Johnston's organ (JO), campaniform sensilla of the wing, stretch receptors and the femoral chordotonal organ of the legs, and multiple dendritic neurons in the abdomen. Isoform D is expressed in a small number of gustatory receptor neurons in the labial palps, the ventral cibarial sense organ (VCSO), and legs. Atypical expression is observed in three neurons in the arista, campaniform sensilla of the wing, stretch and femoral chordotonal organ receptors in the legs, and multiple dendritic neurons in the abdomen. In larvae, Isoform A is expressed in neurons of the terminal external chemosensory organ and the dorsal external chemosensory organ; and isoform E is expressed in neurons of the terminal external chemosensory organ.

It localises to the cell membrane. Its function is as follows. Probable gustatory receptor which mediates acceptance or avoidance behavior, depending on its substrates. Atypical expression also suggests nongustatory roles in the nervous system and tissues involved in proprioception, hygroreception, and other sensory modalities. It is also possible that it has chemosensory roles in the detection of internal ligands. This is Putative gustatory receptor 28b (Gr28b) from Drosophila melanogaster (Fruit fly).